Here is a 578-residue protein sequence, read N- to C-terminus: Arginine--tRNA ligase (578 aa).

A 'HIGH' region motif is present at residues 122-132 (PNVAKEMHVGH).

Belongs to the class-I aminoacyl-tRNA synthetase family. Monomer.

Its subcellular location is the cytoplasm. It carries out the reaction tRNA(Arg) + L-arginine + ATP = L-arginyl-tRNA(Arg) + AMP + diphosphate. The chain is Arginine--tRNA ligase from Shigella sonnei (strain Ss046).